The sequence spans 102 residues: Small ribosomal subunit protein eS24 (102 aa).

This sequence belongs to the eukaryotic ribosomal protein eS24 family.

This Haloarcula marismortui (strain ATCC 43049 / DSM 3752 / JCM 8966 / VKM B-1809) (Halobacterium marismortui) protein is Small ribosomal subunit protein eS24 (rps24e).